Here is a 214-residue protein sequence, read N- to C-terminus: uncharacterized protein (214 aa).

Residues 9–31 (FLYFAISVLVNLLFLKILYIYLF) traverse the membrane as a helical segment. The tract at residues 53 to 74 (APPKKPGKPQKKVVKKKPEAVS) is disordered. Over residues 54–67 (PPKKPGKPQKKVVK) the composition is skewed to basic residues.

The protein resides in the membrane. This is an uncharacterized protein from Aquifex aeolicus (strain VF5).